The following is a 104-amino-acid chain: NADH-quinone oxidoreductase subunit K (104 aa).

3 helical membrane passes run leucine 7–leucine 27, isoleucine 33–phenylalanine 53, and leucine 67–phenylalanine 87.

The protein belongs to the complex I subunit 4L family. In terms of assembly, NDH-1 is composed of 14 different subunits. Subunits NuoA, H, J, K, L, M, N constitute the membrane sector of the complex.

The protein resides in the cell inner membrane. It catalyses the reaction a quinone + NADH + 5 H(+)(in) = a quinol + NAD(+) + 4 H(+)(out). NDH-1 shuttles electrons from NADH, via FMN and iron-sulfur (Fe-S) centers, to quinones in the respiratory chain. The immediate electron acceptor for the enzyme in this species is believed to be ubiquinone. Couples the redox reaction to proton translocation (for every two electrons transferred, four hydrogen ions are translocated across the cytoplasmic membrane), and thus conserves the redox energy in a proton gradient. The sequence is that of NADH-quinone oxidoreductase subunit K from Xanthobacter autotrophicus (strain ATCC BAA-1158 / Py2).